A 346-amino-acid chain; its full sequence is UDP-3-O-acylglucosamine N-acyltransferase (346 aa).

Histidine 253 (proton acceptor) is an active-site residue.

The protein belongs to the transferase hexapeptide repeat family. LpxD subfamily. In terms of assembly, homotrimer.

The enzyme catalyses a UDP-3-O-[(3R)-3-hydroxyacyl]-alpha-D-glucosamine + a (3R)-hydroxyacyl-[ACP] = a UDP-2-N,3-O-bis[(3R)-3-hydroxyacyl]-alpha-D-glucosamine + holo-[ACP] + H(+). It participates in bacterial outer membrane biogenesis; LPS lipid A biosynthesis. Its function is as follows. Catalyzes the N-acylation of UDP-3-O-acylglucosamine using 3-hydroxyacyl-ACP as the acyl donor. Is involved in the biosynthesis of lipid A, a phosphorylated glycolipid that anchors the lipopolysaccharide to the outer membrane of the cell. This is UDP-3-O-acylglucosamine N-acyltransferase from Rickettsia typhi (strain ATCC VR-144 / Wilmington).